Consider the following 332-residue polypeptide: tRNA U34 carboxymethyltransferase (332 aa).

Carboxy-S-adenosyl-L-methionine-binding positions include Lys96, Trp110, Lys115, Gly135, 186 to 187 (LE), Met204, Tyr208, and Arg323.

This sequence belongs to the class I-like SAM-binding methyltransferase superfamily. CmoB family. As to quaternary structure, homotetramer.

The catalysed reaction is carboxy-S-adenosyl-L-methionine + 5-hydroxyuridine(34) in tRNA = 5-carboxymethoxyuridine(34) in tRNA + S-adenosyl-L-homocysteine + H(+). In terms of biological role, catalyzes carboxymethyl transfer from carboxy-S-adenosyl-L-methionine (Cx-SAM) to 5-hydroxyuridine (ho5U) to form 5-carboxymethoxyuridine (cmo5U) at position 34 in tRNAs. The protein is tRNA U34 carboxymethyltransferase of Hydrogenovibrio crunogenus (strain DSM 25203 / XCL-2) (Thiomicrospira crunogena).